The primary structure comprises 478 residues: Isoeugenol monooxygenase (478 aa).

The Fe cation site is built by His167, His218, His282, and His471.

This sequence belongs to the carotenoid oxygenase family. As to quaternary structure, monomer. Requires Fe(2+) as cofactor.

The catalysed reaction is (E)-isoeugenol + O2 = vanillin + acetaldehyde. Inhibited by HgCl(2), AgNO(3), CuCl(2), phenylhydrazine, 8-hydroxyquinoline, R-cycloserine and p-chloromercuribenzoic acid. Its function is as follows. Involved in isoeugenol degradation. Catalyzes the oxidative cleavage of the side chain double-bond of isoeugenol to form vanillin and acetaldehyde. In Pseudomonas putida (Arthrobacter siderocapsulatus), this protein is Isoeugenol monooxygenase.